We begin with the raw amino-acid sequence, 208 residues long: Uracil phosphoribosyltransferase (208 aa).

5-phospho-alpha-D-ribose 1-diphosphate contacts are provided by residues Arg78, Arg103, and 130 to 138 (DPMLATGGT). Residues Ile193 and 198–200 (GDA) each bind uracil. Residue Asp199 coordinates 5-phospho-alpha-D-ribose 1-diphosphate.

Belongs to the UPRTase family. It depends on Mg(2+) as a cofactor.

It catalyses the reaction UMP + diphosphate = 5-phospho-alpha-D-ribose 1-diphosphate + uracil. It functions in the pathway pyrimidine metabolism; UMP biosynthesis via salvage pathway; UMP from uracil: step 1/1. With respect to regulation, allosterically activated by GTP. Functionally, catalyzes the conversion of uracil and 5-phospho-alpha-D-ribose 1-diphosphate (PRPP) to UMP and diphosphate. The sequence is that of Uracil phosphoribosyltransferase from Blochmanniella floridana.